Here is a 1504-residue protein sequence, read N- to C-terminus: Nischarin (1504 aa).

Residue A2 is modified to N-acetylalanine. The segment at 2–133 (ATARTFGPER…GITAALAEEL (132 aa)) is necessary for binding to phosphoinositide-3-P; not sufficient for targeting to endosomes. Residues 11 to 121 (REAEPAKEAR…AHFLHFHFYE (111 aa)) form the PX domain. A necessary for homooligomerization and targeting to endosomes region spans residues 120–695 (YEINGITAAL…ERLALEWALG (576 aa)). The tract at residues 245–869 (LSVRFSATSM…LVYSDKRMVQ (625 aa)) is interaction with PAK1. LRR repeat units follow at residues 288–309 (ALTT…VKLI), 311–332 (KIEF…QHLY), 333–354 (NLVH…HTKL), 356–377 (NIKT…HKLY), 378–399 (SLVN…RSIG), and 403–424 (CLEH…RTKV). The segment covering 463-478 (KSKLSNPEKKGGEDSR) has biased composition (basic and acidic residues). Disordered stretches follow at residues 463 to 501 (KSKL…SASL), 524 to 547 (SSTD…LESI), 554 to 573 (SDDL…EHAE), and 628 to 687 (REEG…EEER). A phosphoserine mark is found at S541, S543, and S546. The stretch at 634 to 695 (EQGEEEDEEE…ERLALEWALG (62 aa)) forms a coiled coil. 2 stretches are compositionally biased toward acidic residues: residues 635–649 (QGEE…EEDV) and 661–685 (DVEE…EAEE). Residues 660 to 869 (PDVEEEEGGG…LVYSDKRMVQ (210 aa)) form an interaction with LIMK region. An interaction with ITGA5 region spans residues 709–807 (KVLWCFLIHV…ANLHEFHADL (99 aa)). The interval 1016 to 1104 (TPGTGGSPQG…PAPPPAEAPA (89 aa)) is disordered. S1022 bears the Phosphoserine mark. The span at 1032–1043 (PAERRASNDQRP) shows a compositional bias: basic and acidic residues. Residues 1063-1078 (PAAASASGPAKTPAPA) show a composition bias toward low complexity. T1282 is modified (phosphothreonine). S1284 carries the phosphoserine modification.

Homooligomer. Interacts with GRB2. Interacts with PIK3R1; probably associates with the PI3-kinase complex. Interacts with IRS4. Found in a complex with ITGA5 and PAK1. Found in a complex with LIMK1 and PAK1. Interacts with ITGA5 (via cytoplasmic domain); this interaction is direct. Interacts with PAK1 (via kinase domain); this interaction is direct and is increased upon activation of PAK1. Interacts with LIMK1 (via PDZ and kinase domain); this interaction is direct. Interacts with LIMK2; this interaction depends on LIMK2 activity. Interacts with RAC1 (activated state). Interacts with STK11; this interaction may increase STK11 activity. Isoform 1, isoform 3 and isoform 4 are expressed in brain. Isoform 1 is expressed in endocrine tissues.

The protein localises to the cell membrane. Its subcellular location is the cytoplasm. It is found in the early endosome. It localises to the recycling endosome. Acts either as the functional imidazoline-1 receptor (I1R) candidate or as a membrane-associated mediator of the I1R signaling. Binds numerous imidazoline ligands that induces initiation of cell-signaling cascades triggering to cell survival, growth and migration. Its activation by the agonist rilmenidine induces an increase in phosphorylation of mitogen-activated protein kinases MAPK1 and MAPK3 in rostral ventrolateral medulla (RVLM) neurons that exhibited rilmenidine-evoked hypotension. Blocking its activation with efaroxan abolished rilmenidine-induced mitogen-activated protein kinase phosphorylation in RVLM neurons. Acts as a modulator of Rac-regulated signal transduction pathways. Suppresses Rac1-stimulated cell migration by interacting with PAK1 and inhibiting its kinase activity. Also blocks Pak-independent Rac signaling by interacting with RAC1 and inhibiting Rac1-stimulated NF-kB response element and cyclin D1 promoter activation. Also inhibits LIMK1 kinase activity by reducing LIMK1 'Tyr-508' phosphorylation. Inhibits Rac-induced cell migration and invasion in breast and colon epithelial cells. Inhibits lamellipodia formation, when overexpressed. Plays a role in protection against apoptosis. Involved in association with IRS4 in the enhancement of insulin activation of MAPK1 and MAPK3. When overexpressed, induces a redistribution of cell surface ITGA5 integrin to intracellular endosomal structures. The polypeptide is Nischarin (NISCH) (Homo sapiens (Human)).